A 484-amino-acid chain; its full sequence is Magnesium transporter MRS2-3 (484 aa).

2 disordered regions span residues 1-40 (MRGA…GRKK) and 141-186 (TKPQ…QSLE). Polar residues predominate over residues 10–24 (NFSTNPSTPNTGQPT). Positions 203-275 (ACLEAASSSL…LLDDDEDMAE (73 aa)) form a coiled coil. The interval 286 to 320 (LEDSSNSSMNESDTFEVDLPQGDEDDRLPPEFASE) is disordered. The segment covering 298 to 311 (DTFEVDLPQGDEDD) has biased composition (acidic residues). A helical transmembrane segment spans residues 416–436 (GVMLTTATLVMSAFIAVAGVF). The Required for magnesium transport activity signature appears at 437–439 (GMN). The helical transmembrane segment at 455 to 475 (FIWTVIGGSIGSICLYVGAIG) threads the bilayer.

Belongs to the CorA metal ion transporter (MIT) (TC 1.A.35.5) family. As to expression, expressed in the whole plant.

It is found in the membrane. Magnesium transporter that may mediate the influx of magnesium. This is Magnesium transporter MRS2-3 (MRS2-3) from Arabidopsis thaliana (Mouse-ear cress).